The following is a 344-amino-acid chain: Ion-translocating oxidoreductase complex subunit D (344 aa).

4 helical membrane-spanning segments follow: residues 23-43 (LVLG…GAGT), 44-64 (LLNL…MLAL), 80-100 (VTAL…LTLV), and 120-140 (PFNP…LEMT). The residue at position 172 (T172) is an FMN phosphoryl threonine. The next 5 helical transmembrane spans lie at 198 to 218 (LGGA…LFLL), 222 to 242 (LFTW…SLLF), 252 to 272 (GSPL…FIVT), 285 to 305 (LLFG…GGYP), and 306 to 326 (DGVA…DYYT).

It belongs to the NqrB/RnfD family. In terms of assembly, the complex is composed of six subunits: RnfA, RnfB, RnfC, RnfD, RnfE and RnfG. The cofactor is FMN.

It localises to the cell inner membrane. In terms of biological role, part of a membrane-bound complex that couples electron transfer with translocation of ions across the membrane. The protein is Ion-translocating oxidoreductase complex subunit D of Pseudomonas paraeruginosa (strain DSM 24068 / PA7) (Pseudomonas aeruginosa (strain PA7)).